The chain runs to 85 residues: DNA-directed RNA polymerase subunit beta'' (85 aa).

This sequence belongs to the RNA polymerase beta' chain family. RpoC2 subfamily. As to quaternary structure, in plastids the minimal PEP RNA polymerase catalytic core is composed of four subunits: alpha, beta, beta', and beta''. When a (nuclear-encoded) sigma factor is associated with the core the holoenzyme is formed, which can initiate transcription.

Its subcellular location is the plastid. It is found in the chloroplast. It carries out the reaction RNA(n) + a ribonucleoside 5'-triphosphate = RNA(n+1) + diphosphate. DNA-dependent RNA polymerase catalyzes the transcription of DNA into RNA using the four ribonucleoside triphosphates as substrates. The chain is DNA-directed RNA polymerase subunit beta'' (rpoC2) from Galdieria sulphuraria (Red alga).